Consider the following 149-residue polypeptide: Arginine repressor (149 aa).

The protein belongs to the ArgR family.

Its subcellular location is the cytoplasm. It participates in amino-acid biosynthesis; L-arginine biosynthesis [regulation]. Its function is as follows. Regulates arginine biosynthesis genes. The polypeptide is Arginine repressor (Chlorobaculum parvum (strain DSM 263 / NCIMB 8327) (Chlorobium vibrioforme subsp. thiosulfatophilum)).